The following is a 201-amino-acid chain: Imidazole glycerol phosphate synthase subunit HisH (201 aa).

One can recognise a Glutamine amidotransferase type-1 domain in the interval 1–201 (MVFIADYGAG…LQVLRNFAEC (201 aa)). Cysteine 79 (nucleophile) is an active-site residue. Catalysis depends on residues histidine 183 and glutamate 185.

Heterodimer of HisH and HisF.

It is found in the cytoplasm. It carries out the reaction 5-[(5-phospho-1-deoxy-D-ribulos-1-ylimino)methylamino]-1-(5-phospho-beta-D-ribosyl)imidazole-4-carboxamide + L-glutamine = D-erythro-1-(imidazol-4-yl)glycerol 3-phosphate + 5-amino-1-(5-phospho-beta-D-ribosyl)imidazole-4-carboxamide + L-glutamate + H(+). It catalyses the reaction L-glutamine + H2O = L-glutamate + NH4(+). It participates in amino-acid biosynthesis; L-histidine biosynthesis; L-histidine from 5-phospho-alpha-D-ribose 1-diphosphate: step 5/9. Functionally, IGPS catalyzes the conversion of PRFAR and glutamine to IGP, AICAR and glutamate. The HisH subunit catalyzes the hydrolysis of glutamine to glutamate and ammonia as part of the synthesis of IGP and AICAR. The resulting ammonia molecule is channeled to the active site of HisF. The sequence is that of Imidazole glycerol phosphate synthase subunit HisH from Chlorobium luteolum (strain DSM 273 / BCRC 81028 / 2530) (Pelodictyon luteolum).